We begin with the raw amino-acid sequence, 313 residues long: tRNA-cytidine(32) 2-sulfurtransferase (313 aa).

A PP-loop motif motif is present at residues 47–52 (SGGKDS). C122, C125, and C213 together coordinate [4Fe-4S] cluster. The interval 288–313 (PVGWQPEDDEDTEKRPPVRLDVLEIK) is disordered. Residues 299–313 (TEKRPPVRLDVLEIK) are compositionally biased toward basic and acidic residues.

It belongs to the TtcA family. As to quaternary structure, homodimer. The cofactor is Mg(2+). Requires [4Fe-4S] cluster as cofactor.

The protein resides in the cytoplasm. The catalysed reaction is cytidine(32) in tRNA + S-sulfanyl-L-cysteinyl-[cysteine desulfurase] + AH2 + ATP = 2-thiocytidine(32) in tRNA + L-cysteinyl-[cysteine desulfurase] + A + AMP + diphosphate + H(+). It participates in tRNA modification. Functionally, catalyzes the ATP-dependent 2-thiolation of cytidine in position 32 of tRNA, to form 2-thiocytidine (s(2)C32). The sulfur atoms are provided by the cysteine/cysteine desulfurase (IscS) system. This chain is tRNA-cytidine(32) 2-sulfurtransferase, found in Yersinia pseudotuberculosis serotype O:1b (strain IP 31758).